The chain runs to 572 residues: Hexokinase (572 aa).

Residues 49-492 enclose the Hexokinase domain; that stretch reads DEPPISLETV…SGKGAALITA (444 aa). The tract at residues 105–237 is hexokinase small subdomain; that stretch reads NGTEEGRFIA…DIKVEVVALI (133 aa). Residues 116–120 and serine 185 contribute to the D-glucose 6-phosphate site; that span reads DLGGT. 116-121 is an ATP binding site; it reads DLGGTN. Residues 185 to 186, 202 to 203, and 238 to 239 contribute to the substrate site; these read SY, TK, and ND. Residues 238–481 form a hexokinase large subdomain region; the sequence is NDTVGTMVAA…LKFKLLQTAD (244 aa). D-glucose 6-phosphate-binding residues include aspartate 239 and threonine 263. ATP is bound at residue threonine 263. Asparagine 266, glutamate 297, and aspartate 331 together coordinate substrate. Residues 336-337, 373-377, and 448-452 each bind ATP; these read GK, TKYIS, and STYKY. D-glucose 6-phosphate contacts are provided by residues 446 to 448 and serine 483; that span reads DGS.

Belongs to the hexokinase family.

It catalyses the reaction a D-hexose + ATP = a D-hexose 6-phosphate + ADP + H(+). The enzyme catalyses D-mannose + ATP = D-mannose 6-phosphate + ADP + H(+). It carries out the reaction D-fructose + ATP = D-fructose 6-phosphate + ADP + H(+). The catalysed reaction is D-glucose + ATP = D-glucose 6-phosphate + ADP + H(+). It participates in carbohydrate metabolism; hexose metabolism. Its pathway is carbohydrate degradation; glycolysis; D-glyceraldehyde 3-phosphate and glycerone phosphate from D-glucose: step 1/4. With respect to regulation, activated by glucose-6-phosphate. Inhibited by N-acetylglucosamine, glucosamine, mannoheptulose and ADP. In terms of biological role, active against glucose, fructose, mannose, maltose and galactose. In Brugia malayi (Filarial nematode worm), this protein is Hexokinase.